We begin with the raw amino-acid sequence, 413 residues long: Histidine--tRNA ligase (413 aa).

The protein belongs to the class-II aminoacyl-tRNA synthetase family. Homodimer.

Its subcellular location is the cytoplasm. The catalysed reaction is tRNA(His) + L-histidine + ATP = L-histidyl-tRNA(His) + AMP + diphosphate + H(+). In Ehrlichia chaffeensis (strain ATCC CRL-10679 / Arkansas), this protein is Histidine--tRNA ligase.